Consider the following 404-residue polypeptide: Phosphoglycerate kinase (404 aa).

Substrate contacts are provided by residues 21–23 (DFN), arginine 38, 61–64 (HLGR), arginine 126, and arginine 159. Residues lysine 210, glutamate 333, and 360-363 (GGDS) each bind ATP.

Belongs to the phosphoglycerate kinase family. As to quaternary structure, monomer.

The protein resides in the cytoplasm. It carries out the reaction (2R)-3-phosphoglycerate + ATP = (2R)-3-phospho-glyceroyl phosphate + ADP. It functions in the pathway carbohydrate degradation; glycolysis; pyruvate from D-glyceraldehyde 3-phosphate: step 2/5. This is Phosphoglycerate kinase from Acidobacterium capsulatum (strain ATCC 51196 / DSM 11244 / BCRC 80197 / JCM 7670 / NBRC 15755 / NCIMB 13165 / 161).